The following is a 247-amino-acid chain: 1-(5-phosphoribosyl)-5-[(5-phosphoribosylamino)methylideneamino] imidazole-4-carboxamide isomerase (247 aa).

Residue Asp-8 is the Proton acceptor of the active site. The Proton donor role is filled by Asp-129.

This sequence belongs to the HisA/HisF family.

It is found in the cytoplasm. The enzyme catalyses 1-(5-phospho-beta-D-ribosyl)-5-[(5-phospho-beta-D-ribosylamino)methylideneamino]imidazole-4-carboxamide = 5-[(5-phospho-1-deoxy-D-ribulos-1-ylimino)methylamino]-1-(5-phospho-beta-D-ribosyl)imidazole-4-carboxamide. It functions in the pathway amino-acid biosynthesis; L-histidine biosynthesis; L-histidine from 5-phospho-alpha-D-ribose 1-diphosphate: step 4/9. The chain is 1-(5-phosphoribosyl)-5-[(5-phosphoribosylamino)methylideneamino] imidazole-4-carboxamide isomerase from Bradyrhizobium sp. (strain BTAi1 / ATCC BAA-1182).